The chain runs to 403 residues: Dual-specificity RNA methyltransferase RlmN (403 aa).

Residue Glu121 is the Proton acceptor of the active site. The 249-residue stretch at 127 to 375 (ETDRGTLCVS…VRTPRGRDIL (249 aa)) folds into the Radical SAM core domain. A disulfide bond links Cys134 and Cys378. Residues Cys141, Cys145, and Cys148 each coordinate [4Fe-4S] cluster. S-adenosyl-L-methionine is bound by residues 204-205 (GE), Ser236, 258-260 (SLH), and Asn335. Cys378 functions as the S-methylcysteine intermediate in the catalytic mechanism.

The protein belongs to the radical SAM superfamily. RlmN family. The cofactor is [4Fe-4S] cluster.

It is found in the cytoplasm. The catalysed reaction is adenosine(2503) in 23S rRNA + 2 reduced [2Fe-2S]-[ferredoxin] + 2 S-adenosyl-L-methionine = 2-methyladenosine(2503) in 23S rRNA + 5'-deoxyadenosine + L-methionine + 2 oxidized [2Fe-2S]-[ferredoxin] + S-adenosyl-L-homocysteine. It catalyses the reaction adenosine(37) in tRNA + 2 reduced [2Fe-2S]-[ferredoxin] + 2 S-adenosyl-L-methionine = 2-methyladenosine(37) in tRNA + 5'-deoxyadenosine + L-methionine + 2 oxidized [2Fe-2S]-[ferredoxin] + S-adenosyl-L-homocysteine. Its function is as follows. Specifically methylates position 2 of adenine 2503 in 23S rRNA and position 2 of adenine 37 in tRNAs. m2A2503 modification seems to play a crucial role in the proofreading step occurring at the peptidyl transferase center and thus would serve to optimize ribosomal fidelity. This chain is Dual-specificity RNA methyltransferase RlmN, found in Rhodopseudomonas palustris (strain BisA53).